Consider the following 396-residue polypeptide: Phosphoglycerate kinase (396 aa).

Substrate is bound by residues 22–24 (DLN), Arg-37, 60–63 (HFGR), Arg-118, and Arg-151. Residues Lys-201, Glu-323, and 353–356 (GGDT) each bind ATP.

This sequence belongs to the phosphoglycerate kinase family. In terms of assembly, monomer.

The protein localises to the cytoplasm. The catalysed reaction is (2R)-3-phosphoglycerate + ATP = (2R)-3-phospho-glyceroyl phosphate + ADP. The protein operates within carbohydrate degradation; glycolysis; pyruvate from D-glyceraldehyde 3-phosphate: step 2/5. The protein is Phosphoglycerate kinase of Xanthobacter autotrophicus (strain ATCC BAA-1158 / Py2).